Consider the following 209-residue polypeptide: Ubiquitin-conjugating enzyme E2 S (209 aa).

The region spanning 14–160 (QTIRQVMREL…ARMMTEIHAQ (147 aa)) is the UBC core domain. Cys-98 acts as the Glycyl thioester intermediate in catalysis. The disordered stretch occupies residues 162 to 209 (AKCGAGAHGDDKDDDGPSTKKHAGLDKKLQDKKKEKLLKEKKRMLKRL). Residues 169-199 (HGDDKDDDGPSTKKHAGLDKKLQDKKKEKLL) show a composition bias toward basic and acidic residues. Positions 200 to 209 (KEKKRMLKRL) are enriched in basic residues.

It belongs to the ubiquitin-conjugating enzyme family.

The catalysed reaction is S-ubiquitinyl-[E1 ubiquitin-activating enzyme]-L-cysteine + [E2 ubiquitin-conjugating enzyme]-L-cysteine = [E1 ubiquitin-activating enzyme]-L-cysteine + S-ubiquitinyl-[E2 ubiquitin-conjugating enzyme]-L-cysteine.. It participates in protein modification; protein ubiquitination. Its function is as follows. Catalyzes the covalent attachment of ubiquitin to other proteins. Acts as an essential factor of the anaphase promoting complex/cyclosome (APC/C), a cell cycle-regulated ubiquitin ligase that controls progression through mitosis. Acts by specifically elongating polyubiquitin chains initiated by the E2 enzyme vih/UbcH10 on APC/C substrates, enhancing the degradation of APC/C substrates by the proteasome and promoting mitotic exit. The protein is Ubiquitin-conjugating enzyme E2 S of Drosophila erecta (Fruit fly).